The chain runs to 126 residues: UPF0538 protein C2orf76 homolog (126 aa).

It belongs to the UPF0538 family.

The sequence is that of UPF0538 protein C2orf76 homolog from Pongo abelii (Sumatran orangutan).